Consider the following 160-residue polypeptide: GPI-anchored protein LLG3 (160 aa).

An N-terminal signal peptide occupies residues 1–23 (MKITHHCLVSLLSILLLSGFAFS). An N-linked (GlcNAc...) asparagine glycan is attached at Asn-56. A lipid anchor (GPI-anchor amidated serine) is attached at Ser-137. A propeptide spans 138 to 160 (HASIPLVSTHVLLITVSILFHLF) (removed in mature form).

As to expression, expressed in pollen, pollen tubes, sporophytic pistil tissues, in the early stages of female gametophyte development, and in unfertilized, mature ovules.

It localises to the cell membrane. The polypeptide is GPI-anchored protein LLG3 (Arabidopsis thaliana (Mouse-ear cress)).